Reading from the N-terminus, the 932-residue chain is Protein translocase subunit SecA (932 aa).

ATP is bound by residues Gln87, 105–109 (GEGKT), and Asp515. Zn(2+) contacts are provided by Cys916, Cys918, Cys927, and His928.

It belongs to the SecA family. Monomer and homodimer. Part of the essential Sec protein translocation apparatus which comprises SecA, SecYEG and auxiliary proteins SecDF-YajC and YidC. Zn(2+) serves as cofactor.

It localises to the cell inner membrane. The protein localises to the cytoplasm. It catalyses the reaction ATP + H2O + cellular proteinSide 1 = ADP + phosphate + cellular proteinSide 2.. In terms of biological role, part of the Sec protein translocase complex. Interacts with the SecYEG preprotein conducting channel. Has a central role in coupling the hydrolysis of ATP to the transfer of proteins into and across the cell membrane, serving both as a receptor for the preprotein-SecB complex and as an ATP-driven molecular motor driving the stepwise translocation of polypeptide chains across the membrane. The polypeptide is Protein translocase subunit SecA (Burkholderia orbicola (strain MC0-3)).